A 229-amino-acid polypeptide reads, in one-letter code: Ribosomal RNA large subunit methyltransferase E (229 aa).

The tract at residues 1-20 is disordered; it reads MSRAGNGGRQRIKTAKGRSA. S-adenosyl-L-methionine is bound by residues Gly-75, Trp-77, Asp-94, Asp-110, and Asp-134. The active-site Proton acceptor is the Lys-174.

The protein belongs to the class I-like SAM-binding methyltransferase superfamily. RNA methyltransferase RlmE family.

It is found in the cytoplasm. The catalysed reaction is uridine(2552) in 23S rRNA + S-adenosyl-L-methionine = 2'-O-methyluridine(2552) in 23S rRNA + S-adenosyl-L-homocysteine + H(+). In terms of biological role, specifically methylates the uridine in position 2552 of 23S rRNA at the 2'-O position of the ribose in the fully assembled 50S ribosomal subunit. The polypeptide is Ribosomal RNA large subunit methyltransferase E (Rhizorhabdus wittichii (strain DSM 6014 / CCUG 31198 / JCM 15750 / NBRC 105917 / EY 4224 / RW1) (Sphingomonas wittichii)).